The following is a 234-amino-acid chain: HTH-type transcriptional regulator ArcR (234 aa).

Residue 40–129 (VRHYTKGQVI…MAFLCKANDD (90 aa)) coordinates a nucleoside 3',5'-cyclic phosphate. Residues 155–228 (KFAKDRIIKL…HKNWLVSKHL (74 aa)) form the HTH crp-type domain. The H-T-H motif DNA-binding region spans 188 to 207 (IQLMSDMAGISRETAGHIIH).

The protein localises to the cytoplasm. Functionally, positively regulates the expression of the arcABDCR operon under anaerobic conditions, thus playing an essential role in arginine catabolism. May also control the expression of genes encoding proteins which are involved in anaerobic metabolism. Can bind cyclic AMP. This chain is HTH-type transcriptional regulator ArcR (arcR), found in Staphylococcus aureus (strain Mu50 / ATCC 700699).